Here is a 311-residue protein sequence, read N- to C-terminus: Heme A synthase (311 aa).

At 1 to 6 (MQRFIK) the chain is on the cytoplasmic side. A helical transmembrane segment spans residues 7–27 (WLAVITSLDLLIVLLGGALVT). The Extracellular portion of the chain corresponds to 28–62 (KTGSGQGCGKSWPLCNGEFVPSNLSMETIIELSHR). Cys-35 and Cys-42 form a disulfide bridge. Glu-58 is a catalytic residue. His-61 is a heme o binding site. A helical transmembrane segment spans residues 63 to 83 (LTSGSAGILVTLLCILSWKYY). At 84–91 (KHVRETKT) the chain is on the cytoplasmic side. The chain crosses the membrane as a helical span at residues 92-112 (LAILSFVFLVAQALMGAAAVV). At 113 to 121 (WGQMPAVLA) the chain is on the extracellular side. A helical transmembrane segment spans residues 122–142 (IHFGISLISFASVILLTCLIF). His-123 provides a ligand contact to heme o. Residues 143 to 159 (EIDQKFDARSLIMDKKM) lie on the Cytoplasmic side of the membrane. The chain crosses the membrane as a helical span at residues 160–180 (KFHIYGVTIYCYLVVYTGALV). Over 181–211 (RHERASLACPDFPLCSKNRPMPTQLHEWVQM) the chain is Extracellular. Cys-189 and Cys-195 are oxidised to a cystine. The helical transmembrane segment at 212–232 (GHRLAAMLIFVWILYAMILAI) threads the bilayer. Heme b is bound at residue His-213. The Cytoplasmic segment spans residues 233 to 243 (RHYKQQPVVYW). Residues 244 to 264 (GWIISFILVTLQAIVGILVVF) form a helical membrane-spanning segment. Over 265 to 271 (TNASLAM) the chain is Extracellular. The helical transmembrane segment at 272–292 (ALLHSLFISCLFAVLCYLVML) threads the bilayer. His-275 lines the heme b pocket. Over 293–311 (GTRSKVNAKEAASTSKQTK) the chain is Cytoplasmic.

This sequence belongs to the COX15/CtaA family. Type 1 subfamily. Interacts with CtaB. Heme b is required as a cofactor.

The protein localises to the cell membrane. The catalysed reaction is Fe(II)-heme o + 2 A + H2O = Fe(II)-heme a + 2 AH2. Its pathway is porphyrin-containing compound metabolism; heme A biosynthesis; heme A from heme O: step 1/1. In terms of biological role, catalyzes the conversion of heme O to heme A by two successive hydroxylations of the methyl group at C8. The first hydroxylation forms heme I, the second hydroxylation results in an unstable dihydroxymethyl group, which spontaneously dehydrates, resulting in the formyl group of heme A. The chain is Heme A synthase from Bacillus cereus (strain 03BB102).